A 242-amino-acid chain; its full sequence is Ribosomal RNA small subunit methyltransferase G (242 aa).

S-adenosyl-L-methionine is bound by residues Gly78, Phe83, 129–130, and Arg148; that span reads AE. The disordered stretch occupies residues 221-242; it reads TKKRYPRKAGVPEKSPIGGKHD.

It belongs to the methyltransferase superfamily. RNA methyltransferase RsmG family.

It is found in the cytoplasm. Functionally, specifically methylates the N7 position of a guanine in 16S rRNA. The protein is Ribosomal RNA small subunit methyltransferase G of Oenococcus oeni (strain ATCC BAA-331 / PSU-1).